The following is a 289-amino-acid chain: Nucleotide-binding protein CHY_0272 (289 aa).

Glycine 8–threonine 15 contributes to the ATP binding site. GTP is bound at residue aspartate 59–glycine 62.

The protein belongs to the RapZ-like family.

Functionally, displays ATPase and GTPase activities. The polypeptide is Nucleotide-binding protein CHY_0272 (Carboxydothermus hydrogenoformans (strain ATCC BAA-161 / DSM 6008 / Z-2901)).